The following is a 513-amino-acid chain: Maturase K (513 aa).

It belongs to the intron maturase 2 family. MatK subfamily.

It localises to the plastid. The protein localises to the chloroplast. Its function is as follows. Usually encoded in the trnK tRNA gene intron. Probably assists in splicing its own and other chloroplast group II introns. The sequence is that of Maturase K from Sporobolus indicus (Smut grass).